A 2002-amino-acid chain; its full sequence is Methylcytosine dioxygenase TET2 (2002 aa).

Basic and acidic residues predominate over residues 1–11 (MEQDRTNHVEG). Positions 1-22 (MEQDRTNHVEGNRLSPFLIPSP) are disordered. A phosphoserine mark is found at serine 15, serine 75, and serine 99. Residues 113–124 (KQDQKANGERRN) show a composition bias toward basic and acidic residues. 7 disordered regions span residues 113 to 154 (KQDQ…VSSV), 266 to 287 (HPSHTSGQINSAQTSNSELPPK), 349 to 368 (GEEFCSGSSSNLQAPGGSSE), 390 to 488 (DSFS…VNRN), 703 to 748 (LNQQ…QQKL), 930 to 949 (VPDQGGSHTQTPPQKDTQKH), and 1075 to 1095 (DSHTPALEQQTTSSEKTPTKR). Composition is skewed to polar residues over residues 126-143 (GVSQERNPGESSQPNVSD) and 267-283 (PSHTSGQINSAQTSNSE). The segment covering 397–416 (TPPPPSQLLLSPPPPLPQVP) has biased composition (pro residues). Polar residues-rich tracts occupy residues 479-488 (RPQNNCVNRN) and 703-718 (LNQQASETEPFSNSHL). Residues 731-748 (QPSQSSHLPQNQQQQQKL) show a composition bias toward low complexity. Composition is skewed to polar residues over residues 935–944 (GSHTQTPPQK) and 1081–1095 (LEQQTTSSEKTPTKR). 2 positions are modified to phosphoserine: serine 1107 and serine 1109. Zn(2+) contacts are provided by cysteine 1133, cysteine 1135, cysteine 1193, histidine 1219, and cysteine 1221. Residue arginine 1261 coordinates 2-oxoglutarate. Residues cysteine 1271, cysteine 1273, cysteine 1289, and cysteine 1298 each contribute to the Zn(2+) site. Residues 1290-1303 (SWSMYYNGCKFARS) form an interaction with DNA region. A Glycyl lysine isopeptide (Lys-Gly) (interchain with G-Cter in ubiquitin) cross-link involves residue lysine 1299. Cysteine 1358 is a binding site for Zn(2+). Cysteine 1374 contributes to the 2-oxoglutarate binding site. A Zn(2+)-binding site is contributed by histidine 1380. 2 residues coordinate Fe cation: histidine 1382 and aspartate 1384. Asparagine 1387 lines the substrate pocket. Histidine 1416 provides a ligand contact to 2-oxoglutarate. 2 disordered regions span residues 1475-1507 (AAEKLSSLENSSNKNEKEKSAPSRTKQTENASQ) and 1521-1587 (VMQQ…HTSD). The segment covering 1477–1487 (EKLSSLENSSN) has biased composition (low complexity). The segment covering 1496–1507 (PSRTKQTENASQ) has biased composition (polar residues). Low complexity-rich tracts occupy residues 1523–1532 (QQSQQPQPLQ) and 1539–1551 (QQQQRPQQQQPHH). Residues 1554-1568 (TESVNSYSASGSTNP) show a composition bias toward polar residues. Arginine 1682 is modified (asymmetric dimethylarginine). Histidine 1881 provides a ligand contact to Fe cation. Residue 1896–1898 (RIS) participates in 2-oxoglutarate binding. 1902–1904 (YQH) is a substrate binding site. Histidine 1912 provides a ligand contact to Zn(2+). The disordered stretch occupies residues 1932 to 1961 (CEKYGPDYVPQKSHGKKVKREPAEPHETSE). Residues 1951–1960 (REPAEPHETS) show a composition bias toward basic and acidic residues.

Belongs to the TET family. Interacts with HCFC1. Interacts with OGT. Interacts with PROSER1; this interaction mediates TET2 O-GlcNAcylation and stability by promoting the interaction between OGT and TET2. Directly interacts (via C-terminus) with the DCAF1 component of the CRL4(VprBP) E3 ubiquitin-protein ligase complex. Fe(2+) is required as a cofactor. Requires Zn(2+) as cofactor. Post-translationally, may be glycosylated. It is unclear whether interaction with OGT leads to GlcNAcylation. According to a report, it is not GlcNAcylated by OGT. In contrast, another group reports GlcNAcylation by OGT in mouse ortholog. Monoubiquitinated at Lys-1299 by the DCX (DDB1-CUL4-X-box) E3 ubiquitin-protein ligase complex called CRL4(VprBP) or CUL4A-RBX1-DDB1-DCAF1/VPRBP complex; this modification promotes binding to DNA. In terms of processing, acetylated. Deacetylase HDAC6 acts as a valine sensor by binding to valine through its primate-specific SE14 repeat region and deacetylates TET2 following valine deprivation which promotes TET2-dependent DNA demethylation. As to expression, broadly expressed. Highly expressed in hematopoietic cells; highest expression observed in granulocytes. Expression is reduced in granulocytes from peripheral blood of patients affected by myelodysplastic syndromes.

It localises to the nucleus. It is found in the chromosome. The enzyme catalyses a 5-methyl-2'-deoxycytidine in DNA + 2-oxoglutarate + O2 = a 5-hydroxymethyl-2'-deoxycytidine in DNA + succinate + CO2. It catalyses the reaction a 5-hydroxymethyl-2'-deoxycytidine in DNA + 2-oxoglutarate + O2 = a 5-formyl-2'-deoxycytidine in DNA + succinate + CO2 + H2O. The catalysed reaction is a 5-formyl-2'-deoxycytidine in DNA + 2-oxoglutarate + O2 = a 5-carboxyl-2'-deoxycytidine in DNA + succinate + CO2 + H(+). Functionally, dioxygenase that catalyzes the conversion of the modified genomic base 5-methylcytosine (5mC) into 5-hydroxymethylcytosine (5hmC) and plays a key role in active DNA demethylation. Has a preference for 5-hydroxymethylcytosine in CpG motifs. Also mediates subsequent conversion of 5hmC into 5-formylcytosine (5fC), and conversion of 5fC to 5-carboxylcytosine (5caC). Conversion of 5mC into 5hmC, 5fC and 5caC probably constitutes the first step in cytosine demethylation. Methylation at the C5 position of cytosine bases is an epigenetic modification of the mammalian genome which plays an important role in transcriptional regulation. In addition to its role in DNA demethylation, also involved in the recruitment of the O-GlcNAc transferase OGT to CpG-rich transcription start sites of active genes, thereby promoting histone H2B GlcNAcylation by OGT. In Homo sapiens (Human), this protein is Methylcytosine dioxygenase TET2 (TET2).